Reading from the N-terminus, the 176-residue chain is HTH-type transcriptional regulator DctR (176 aa).

The HTH luxR-type domain occupies 109–174 (VPEADVSLSR…ELVRHQHINY (66 aa)). Positions 133 to 152 (TEDILEKLKISLKTFYCHKH) form a DNA-binding region, H-T-H motif.

In terms of biological role, may act as a transcriptional regulator of dctA. The polypeptide is HTH-type transcriptional regulator DctR (dctR) (Escherichia coli O6:H1 (strain CFT073 / ATCC 700928 / UPEC)).